The chain runs to 93 residues: Bacterial microcompartment shell protein PduA (93 aa).

Residues 5-89 form the BMC domain; it reads ALGMVETKGL…PHTDVEKILP (85 aa).

The protein belongs to the bacterial microcompartments protein family. As to quaternary structure, homohexamer with a central pore; Lys-26 and Arg-79 interactions are very important for hexamer symmetry. The hexamers pack against each other in arrays. Interacts individually with shell proteins PduB, PduB', PduJ, PduK, PduN and PduU. Modeling suggests PduC, PduD, PduE, PduL and PduP interact with a cleft formed by the C-terminal segments of 2 adjacent PduA subunits (on the BMC luminal side) in the hexamer.

The protein resides in the bacterial microcompartment. Its pathway is polyol metabolism; 1,2-propanediol degradation. One of the major shell proteins of the bacterial microcompartment (BMC) dedicated to 1,2-propanediol (1,2-PD) degradation, probably important for metabolite diffusion into and out of the BMC. Overexpression of a C-terminally mutated form (PduA*) makes thin parallel filaments with a honeycomb-like assembly in cross-section that probably form nanotubes. The filaments interfere with septation. PduA is probably the hub for binding multiple enzymes to the interior of the BMC. At least one of PduA or PduJ is required for BMC assembly; it must be encoded as the first gene in the pdu operon. In terms of biological role, expression of a cosmid containing the full 21-gene pdu operon in E.coli allows E.coli to grow on 1,2-PD with the appearance of BMCs in its cytoplasm. Overexpression of this protein leads to aberrant intracellular filaments. Functionally, the 1,2-PD-specific bacterial microcompartment (BMC) concentrates low levels of 1,2-PD catabolic enzymes, concentrates volatile reaction intermediates thus enhancing pathway flux and keeps the level of toxic, mutagenic propionaldehyde low. The polypeptide is Bacterial microcompartment shell protein PduA (Citrobacter freundii).